We begin with the raw amino-acid sequence, 413 residues long: Alpha-1-antitrypsin 1-5 (413 aa).

An N-terminal signal peptide occupies residues 1 to 24; that stretch reads MTPSISWCLLLLAGLCCLVPSFLA. Residues Asn-64, Asn-101, and Asn-265 are each glycosylated (N-linked (GlcNAc...) asparagine). The interval 368-387 is RCL; it reads AATVLQGGFLSMPPILHFNR.

It belongs to the serpin family.

It is found in the secreted. Its function is as follows. Does not inhibit elastase or chymotrypsin. No target protease has been identified to date. The sequence is that of Alpha-1-antitrypsin 1-5 (Serpina1e) from Mus musculus (Mouse).